Reading from the N-terminus, the 474-residue chain is Methylenetetrahydrofolate--tRNA-(uracil-5-)-methyltransferase TrmFO (474 aa).

14–19 (GGGLAG) serves as a coordination point for FAD.

The protein belongs to the MnmG family. TrmFO subfamily. It depends on FAD as a cofactor.

The protein localises to the cytoplasm. It carries out the reaction uridine(54) in tRNA + (6R)-5,10-methylene-5,6,7,8-tetrahydrofolate + NADH + H(+) = 5-methyluridine(54) in tRNA + (6S)-5,6,7,8-tetrahydrofolate + NAD(+). The catalysed reaction is uridine(54) in tRNA + (6R)-5,10-methylene-5,6,7,8-tetrahydrofolate + NADPH + H(+) = 5-methyluridine(54) in tRNA + (6S)-5,6,7,8-tetrahydrofolate + NADP(+). In terms of biological role, catalyzes the folate-dependent formation of 5-methyl-uridine at position 54 (M-5-U54) in all tRNAs. This chain is Methylenetetrahydrofolate--tRNA-(uracil-5-)-methyltransferase TrmFO, found in Caulobacter vibrioides (strain ATCC 19089 / CIP 103742 / CB 15) (Caulobacter crescentus).